Here is a 122-residue protein sequence, read N- to C-terminus: Large ribosomal subunit protein uL14 (122 aa).

This sequence belongs to the universal ribosomal protein uL14 family. In terms of assembly, part of the 50S ribosomal subunit. Forms a cluster with proteins L3 and L19. In the 70S ribosome, L14 and L19 interact and together make contacts with the 16S rRNA in bridges B5 and B8.

Its function is as follows. Binds to 23S rRNA. Forms part of two intersubunit bridges in the 70S ribosome. This chain is Large ribosomal subunit protein uL14, found in Syntrophobacter fumaroxidans (strain DSM 10017 / MPOB).